The primary structure comprises 1163 residues: Restriction of telomere capping protein 1 (1163 aa).

Residues 24-52 (GTPQSSNSPSANSSISSHKSSKRLSKNQL) form a disordered region. Positions 28–41 (SSNSPSANSSISSH) are enriched in low complexity. WD repeat units follow at residues 129-169 (RNPN…KGTL), 175-214 (DHRR…TKPV), 221-265 (LHND…GSNM), 274-313 (LHAG…SLRT), and 346-392 (GMGS…IPKQ). Disordered stretches follow at residues 525-606 (AGSS…GSFG) and 833-881 (DVHS…DSTT). Composition is skewed to polar residues over residues 539–556 (LTRS…TKSP), 571–585 (SPPS…STYT), 593–606 (NPSQ…GSFG), and 868–880 (VHSQ…IDST). An RING-type; degenerate zinc finger spans residues 1114–1157 (CVFCNEPCKGLVVAISLKCGHRGHFGCLKEWFIDEQNVECPGGC).

This sequence belongs to the WD repeat RTC1 family.

It localises to the vacuole. Its function is as follows. May be involved in a process influencing telomere capping. The sequence is that of Restriction of telomere capping protein 1 (RTC1) from Lodderomyces elongisporus (strain ATCC 11503 / CBS 2605 / JCM 1781 / NBRC 1676 / NRRL YB-4239) (Yeast).